Consider the following 407-residue polypeptide: Argininosuccinate synthase (407 aa).

Residues 16-24 (AYSGGLDTS) and alanine 44 each bind ATP. L-citrulline is bound by residues tyrosine 96 and serine 101. Glycine 126 serves as a coordination point for ATP. L-aspartate-binding residues include threonine 128, asparagine 132, and aspartate 133. Position 132 (asparagine 132) interacts with L-citrulline. L-citrulline contacts are provided by arginine 136, serine 185, serine 194, glutamate 270, and tyrosine 282.

The protein belongs to the argininosuccinate synthase family. Type 1 subfamily. As to quaternary structure, homotetramer.

The protein resides in the cytoplasm. It catalyses the reaction L-citrulline + L-aspartate + ATP = 2-(N(omega)-L-arginino)succinate + AMP + diphosphate + H(+). Its pathway is amino-acid biosynthesis; L-arginine biosynthesis; L-arginine from L-ornithine and carbamoyl phosphate: step 2/3. The sequence is that of Argininosuccinate synthase from Shewanella sediminis (strain HAW-EB3).